Consider the following 153-residue polypeptide: Membrane-spanning 4-domains subfamily A member 13 (153 aa).

4 consecutive transmembrane segments (helical) span residues 1–21 (MTGI…MGQI), 36–56 (GCSL…RATW), 71–91 (ILCM…LSTF), and 111–131 (VLLS…IFGC).

Belongs to the MS4A family.

Its subcellular location is the membrane. In terms of biological role, may be involved in signal transduction as a component of a multimeric receptor complex. The chain is Membrane-spanning 4-domains subfamily A member 13 (MS4A13) from Bos taurus (Bovine).